The primary structure comprises 235 residues: uncharacterized protein (235 aa).

Disordered stretches follow at residues 60-96 and 192-235; these read SSNR…QKKT and LNTS…YDSF. Polar residues predominate over residues 80–93; that stretch reads SFQNMNSSMPSSTQ. Positions 197–214 are enriched in acidic residues; the sequence is SEDDTESIVETDYSEEEK.

Belongs to the asfivirus DP238L family.

This is an uncharacterized protein from Ornithodoros (relapsing fever ticks).